A 618-amino-acid polypeptide reads, in one-letter code: GMC oxidoreductase family protein Mala s 12 (618 aa).

The N-terminal stretch at 1–23 (MKGIVSWAVVSAALVLSATESLA) is a signal peptide. Residues V129 and V280 each coordinate FAD. H556 functions as the Proton donor in the catalytic mechanism. The Proton acceptor role is filled by H599.

The protein belongs to the GMC oxidoreductase family. As to quaternary structure, monomer. The cofactor is FAD.

The protein localises to the secreted. The polypeptide is GMC oxidoreductase family protein Mala s 12 (Malassezia sympodialis (strain ATCC 42132) (Atopic eczema-associated yeast)).